Reading from the N-terminus, the 242-residue chain is MRKQIVADNIHGETGLDGPVFESLTRQAESTHAVKYIIDTLMASDGDITLVPVGPLSNIAVAMRMQPAILPKIREIVLMGGAYGTGNFTPSAEFNIFADPEAARVVFTSGVPLVMIGLDLTNQTVCTPDVIARMERAGGPAGELFSDIMNFTLKTQFENYGLAGGPVHDATCIGYLINPDGIKTQEMYVEVDVNSGPCYGRTVCDELGVLGKPANTKVGITIDTDWFWGLVEECVRGYIKTH.

Substrate is bound by residues Q156 and H168.

Belongs to the IUNH family. RihB subfamily.

It catalyses the reaction a pyrimidine ribonucleoside + H2O = a pyrimidine nucleobase + D-ribose. In Shigella boydii serotype 4 (strain Sb227), this protein is Putative pyrimidine-specific ribonucleoside hydrolase RihB (rihB).